Consider the following 376-residue polypeptide: Pulmonary surfactant-associated protein B (376 aa).

Residues 1–24 (MAKLHLQWLLLLPTLCSLGAATES) form the signal peptide. A Saposin A-type domain is found at 25–63 (ASSPDCAQGPKFWCQSLEQAIQCRALGHCLQEVWGHAGA). Positions 25–190 (ASSPDCAQGP…PHTQDLSEQQ (166 aa)) are excised as a propeptide. Saposin B-type domains follow at residues 63–145 (ANDL…PLGQ), 194–271 (PLPF…STAD), and 290–365 (QDTE…EAPA). Intrachain disulfides connect Cys67-Cys141, Cys70-Cys135, Cys98-Cys110, Cys198-Cys267, Cys201-Cys261, Cys225-Cys236, Cys294-Cys361, Cys297-Cys355, and Cys320-Cys330. Positions 270–376 (ADAIGPALPA…PLQCFQTPHL (107 aa)) are excised as a propeptide. Residue Asn306 is glycosylated (N-linked (GlcNAc...) asparagine).

In terms of assembly, homodimer; disulfide-linked.

It localises to the secreted. The protein resides in the extracellular space. The protein localises to the surface film. Functionally, pulmonary surfactant-associated proteins promote alveolar stability by lowering the surface tension at the air-liquid interface in the peripheral air spaces. SP-B increases the collapse pressure of palmitic acid to nearly 70 millinewtons per meter. The protein is Pulmonary surfactant-associated protein B (Sftpb) of Rattus norvegicus (Rat).